Reading from the N-terminus, the 364-residue chain is Doublecortin domain-containing protein 2C (364 aa).

Doublecortin domains lie at Lys16 to Ile98 and Arg136 to Trp217. Residues Val233–Gly255 form a disordered region.

As to expression, expressed in testis and spermatozoa (at protein level).

It is found in the cell projection. The protein localises to the cilium. It localises to the flagellum. The protein resides in the cytoplasm. The protein is Doublecortin domain-containing protein 2C of Homo sapiens (Human).